The chain runs to 1099 residues: Transmembrane protein 132C (1099 aa).

An N-terminal signal peptide occupies residues M1–S31. At R32–D915 the chain is on the extracellular side. N95 carries an N-linked (GlcNAc...) asparagine glycan. Residues G237–R260 are disordered. N-linked (GlcNAc...) asparagine glycosylation is found at N314 and N371. The tract at residues D801 to D872 is disordered. Residues E813 to G849 show a composition bias toward basic and acidic residues. The helical transmembrane segment at L916–I936 threads the bilayer. At N937 to V1099 the chain is on the cytoplasmic side. The disordered stretch occupies residues N1002 to K1045. Positions G1008–V1018 are enriched in polar residues.

Belongs to the TMEM132 family.

It localises to the membrane. This is Transmembrane protein 132C (Tmem132c) from Mus musculus (Mouse).